We begin with the raw amino-acid sequence, 486 residues long: Hexosaminidase D (486 aa).

Glutamate 149 serves as the catalytic Proton donor.

This sequence belongs to the glycosyl hydrolase 20 family. Homodimer; disulfide-linked. In terms of tissue distribution, expressed in synovial fibroblasts and synovial membranes.

Its subcellular location is the cytoplasm. It is found in the nucleus. The protein localises to the extracellular vesicle. It carries out the reaction Hydrolysis of terminal non-reducing N-acetyl-D-hexosamine residues in N-acetyl-beta-D-hexosaminides.. Its activity is regulated as follows. Inhibited by O-(2-acetamido-2-deoxy-D-glucopyranosylidene)amino N-phenylcarbamate (PUGNAc). Inhibited by galacto-NAG-thiazoline. In terms of biological role, has hexosaminidase activity. Responsible for the cleavage of the monosaccharides N-acetylglucosamine (GlcNAc) and N-acetylgalactosamine (GalNAc) from cellular substrates. Has a preference for galactosaminide over glucosaminide substrates. This is Hexosaminidase D from Homo sapiens (Human).